Consider the following 261-residue polypeptide: Carnitinyl-CoA dehydratase (261 aa).

The Nucleophile role is filled by glutamate 111. The Proton acceptor role is filled by glutamate 131.

The protein belongs to the enoyl-CoA hydratase/isomerase family.

It catalyses the reaction (R)-carnitinyl-CoA = crotonobetainyl-CoA + H2O. It functions in the pathway amine and polyamine metabolism; carnitine metabolism. Functionally, catalyzes the reversible dehydration of L-carnitinyl-CoA to crotonobetainyl-CoA. The protein is Carnitinyl-CoA dehydratase of Salmonella typhi.